A 578-amino-acid chain; its full sequence is Palmitoyltransferase ZDHHC1 (578 aa).

Topologically, residues 1–41 are cytoplasmic; it reads MDVCSKNSNRTAPVSEGGIRRADVPLCSRTNGWSWPPHPFQ. A helical transmembrane segment spans residues 42 to 62; that stretch reads FLAWLLYLYFAVTGFGVFVPL. The Lumenal segment spans residues 63-71; the sequence is LPTHWIPAG. A helical transmembrane segment spans residues 72-92; it reads YICTGITFVCHLFMHLMAVSI. Over 93-174 the chain is Cytoplasmic; sequence DPADYNVRAK…YWLFLNSVIS (82 aa). Positions 121-173 constitute a DHHC domain; that stretch reads ENCHCYLCEVDVGPKSKHCSACNKCVASFDHHCRWLNNCVGSRNYWLFLNSVI. The active-site S-palmitoyl cysteine intermediate is C153. A helical transmembrane segment spans residues 175–195; sequence ALLGIVLVVVIASYVFIEFFL. Over 196-230 the chain is Lumenal; the sequence is DPSKLRSDKHFQQVRNESVVWFVFLPVAPVTTAGP. A helical membrane pass occupies residues 231–251; that stretch reads AIPALAGVTIALGLLSALLLG. At 252-578 the chain is on the cytoplasmic side; sequence HLLCFHIYLM…PSSRVGTSLA (327 aa). A compositionally biased stretch (basic and acidic residues) spans 278-288; that stretch reads QEAGDSRKPPP. 4 disordered regions span residues 278 to 298, 345 to 376, 497 to 517, and 532 to 578; these read QEAGDSRKPPPENDSGVPKLN, HMDEEEHLPSVLTEQKASPHPHKHAQKKKRKV, SAAGHAAPSPQPRTKRKTAAR, and SMFM…TSLA. Basic residues predominate over residues 363-376; that stretch reads PHPHKHAQKKKRKV. Over residues 552 to 561 the composition is skewed to basic residues; sequence AAKRKQTGKK.

The protein belongs to the DHHC palmitoyltransferase family.

The protein localises to the endosome membrane. The protein resides in the endoplasmic reticulum membrane. It is found in the golgi apparatus. The enzyme catalyses L-cysteinyl-[protein] + hexadecanoyl-CoA = S-hexadecanoyl-L-cysteinyl-[protein] + CoA. Palmitoyltransferase that catalyzes the addition of palmitate onto various protein substrates, such as ncdn and nlrp3. This chain is Palmitoyltransferase ZDHHC1, found in Danio rerio (Zebrafish).